A 377-amino-acid polypeptide reads, in one-letter code: tRNA-specific 2-thiouridylase MnmA (377 aa).

ATP is bound by residues 18-25 and Met-44; that span reads GMSGGVDS. The segment at 104–106 is interaction with target base in tRNA; it reads NPD. Cys-109 serves as the catalytic Nucleophile. A disulfide bond links Cys-109 and Cys-209. Residue Gly-134 coordinates ATP. The interval 159 to 161 is interaction with tRNA; sequence KDQ. Cys-209 (cysteine persulfide intermediate) is an active-site residue. Positions 324 to 325 are interaction with tRNA; it reads RY.

The protein belongs to the MnmA/TRMU family.

The protein resides in the cytoplasm. The catalysed reaction is S-sulfanyl-L-cysteinyl-[protein] + uridine(34) in tRNA + AH2 + ATP = 2-thiouridine(34) in tRNA + L-cysteinyl-[protein] + A + AMP + diphosphate + H(+). Its function is as follows. Catalyzes the 2-thiolation of uridine at the wobble position (U34) of tRNA, leading to the formation of s(2)U34. The sequence is that of tRNA-specific 2-thiouridylase MnmA from Photobacterium profundum (strain SS9).